A 433-amino-acid chain; its full sequence is Glutamate-1-semialdehyde 2,1-aminomutase (433 aa).

The residue at position 271 (lysine 271) is an N6-(pyridoxal phosphate)lysine.

The protein belongs to the class-III pyridoxal-phosphate-dependent aminotransferase family. HemL subfamily. In terms of assembly, homodimer. The cofactor is pyridoxal 5'-phosphate.

The protein resides in the cytoplasm. The enzyme catalyses (S)-4-amino-5-oxopentanoate = 5-aminolevulinate. It functions in the pathway porphyrin-containing compound metabolism; protoporphyrin-IX biosynthesis; 5-aminolevulinate from L-glutamyl-tRNA(Glu): step 2/2. It participates in porphyrin-containing compound metabolism; chlorophyll biosynthesis. The polypeptide is Glutamate-1-semialdehyde 2,1-aminomutase (Prochlorococcus marinus subsp. pastoris (strain CCMP1986 / NIES-2087 / MED4)).